A 101-amino-acid polypeptide reads, in one-letter code: Small ribosomal subunit protein uS14 (101 aa).

Belongs to the universal ribosomal protein uS14 family. Part of the 30S ribosomal subunit. Contacts proteins S3 and S10.

Binds 16S rRNA, required for the assembly of 30S particles and may also be responsible for determining the conformation of the 16S rRNA at the A site. The protein is Small ribosomal subunit protein uS14 of Leifsonia xyli subsp. xyli (strain CTCB07).